A 293-amino-acid chain; its full sequence is Probable porphobilinogen deaminase (293 aa).

Cys233 is subject to S-(dipyrrolylmethanemethyl)cysteine.

Belongs to the HMBS family. It depends on dipyrromethane as a cofactor.

The catalysed reaction is 4 porphobilinogen + H2O = hydroxymethylbilane + 4 NH4(+). It participates in porphyrin-containing compound metabolism; protoporphyrin-IX biosynthesis; coproporphyrinogen-III from 5-aminolevulinate: step 2/4. Tetrapolymerization of the monopyrrole PBG into the hydroxymethylbilane pre-uroporphyrinogen in several discrete steps. The chain is Probable porphobilinogen deaminase from Saccharolobus islandicus (strain Y.G.57.14 / Yellowstone #1) (Sulfolobus islandicus).